The following is a 106-amino-acid chain: MEYVYAALLLHSAGKEITEDNVKAVLEAAGVEVDEARVKALVAALEGVNIDEAIQKAAMPMAVAAAPAAAAAAPAEEAKEEAKEEEEEEEEVKEEEAIEGLGALFG.

The segment at 69–106 (AAAAAPAEEAKEEAKEEEEEEEEVKEEEAIEGLGALFG) is disordered. Acidic residues predominate over residues 83–98 (KEEEEEEEEVKEEEAI).

Belongs to the eukaryotic ribosomal protein P1/P2 family. Part of the 50S ribosomal subunit. Homodimer, it forms part of the ribosomal stalk which helps the ribosome interact with GTP-bound translation factors. Forms a heptameric uL10/P0(P1)2(P1)2(P1)2 complex, where uL10/P0 forms an elongated spine to which the P1 dimers bind in a sequential fashion.

Functionally, forms part of the ribosomal stalk, playing a central role in the interaction of the ribosome with GTP-bound translation factors. In Archaeoglobus fulgidus (strain ATCC 49558 / DSM 4304 / JCM 9628 / NBRC 100126 / VC-16), this protein is Large ribosomal subunit protein P1.